The chain runs to 141 residues: Hemoglobin subunit alpha-1/2 (141 aa).

One can recognise a Globin domain in the interval 1–141 (VLSPADKTNV…VSTVLTSKYR (141 aa)). At Ser3 the chain carries Phosphoserine. Lys7 is modified (N6-succinyllysine). Position 8 is a phosphothreonine (Thr8). Residue Lys11 is modified to N6-succinyllysine. Residue Lys16 is modified to N6-acetyllysine; alternate. Lys16 is subject to N6-succinyllysine; alternate. Tyr24 is modified (phosphotyrosine). The residue at position 40 (Lys40) is an N6-succinyllysine. Ser49 bears the Phosphoserine mark. His58 provides a ligand contact to O2. His87 is a heme b binding site. Phosphoserine is present on Ser102. Thr108 is modified (phosphothreonine). A Phosphoserine modification is found at Ser124. Phosphothreonine occurs at positions 134 and 137. Ser138 is modified (phosphoserine).

This sequence belongs to the globin family. Heterotetramer of two alpha chains and two beta chains. In terms of tissue distribution, red blood cells.

Functionally, involved in oxygen transport from the lung to the various peripheral tissues. The protein is Hemoglobin subunit alpha-1/2 of Leptonychotes weddellii (Weddell seal).